The following is a 227-amino-acid chain: Isopentenyl-diphosphate delta-isomerase 2 (227 aa).

Position 36 (Lys-36) interacts with substrate. Residues His-40 and His-51 each coordinate Mg(2+). In terms of domain architecture, Nudix hydrolase spans 49–199 (LLHRAFSVVL…EVKVTPWLRT (151 aa)). Substrate contacts are provided by Arg-70 and Lys-74. Residue Ser-86 is part of the active site. Ser-87 contacts substrate. 2 residues coordinate Mg(2+): Glu-146 and Glu-148. Residue Glu-148 is part of the active site. The Microbody targeting signal signature appears at 225–227 (HRV).

It belongs to the IPP isomerase type 1 family. Mg(2+) is required as a cofactor. Muscle-specific expression.

It localises to the peroxisome. The enzyme catalyses isopentenyl diphosphate = dimethylallyl diphosphate. It participates in isoprenoid biosynthesis; dimethylallyl diphosphate biosynthesis; dimethylallyl diphosphate from isopentenyl diphosphate: step 1/1. Catalyzes the 1,3-allylic rearrangement of the homoallylic substrate isopentenyl (IPP) to its highly electrophilic allylic isomer, dimethylallyl diphosphate (DMAPP). The chain is Isopentenyl-diphosphate delta-isomerase 2 (IDI2) from Homo sapiens (Human).